The sequence spans 506 residues: MSTANNNSEHPESVSLNAFKQPKAFYLIFSIELWERFGYYGLQGIMAVYLVKMLGLSEADSITLFSSFSALVYGFVAIGGWLGDKVLGSKRVIVLGALVLAVGYAMVAYSGHEIFWVYLGMATIAVGSGLFKANPSSLLSTCYEKDDPRLDGAFTMYYMSVNIGSFLSMLATPWLAAKYGWSVAFSLSVVGMLITLVNFMVCHKWVKQHGSKPDFKPLQVKKLLMVLVGVVALVALSSWLLHNQIIARWALAIVSIGIVIVFAKETFALHGAARRKMIVAFLLMLEAVVFFVLYSQMPTSLNFFAIHNVEHNILGLAFEPEQYQALNPFWIMLASPILAALYNKMGDRLPMPHKFAFGMILCSGAFLVLPWGASFANEQGIVSVNWLILSYALQSIGELMISGLGLAMVAQLVPQRLMGFIMGSWFLTTAAAALIAGKVAGLTAVPGDVNDAHASLAIYSHVFMQIGIATAVIAILMMLTAPKLHRMTLDTAEDTEKKAQAAAITN.

Over methionine 1–arginine 36 the chain is Cytoplasmic. A helical transmembrane segment spans residues phenylalanine 37–serine 57. Residues glutamate 58–serine 61 lie on the Periplasmic side of the membrane. Residues isoleucine 62 to leucine 82 traverse the membrane as a helical segment. The Cytoplasmic portion of the chain corresponds to glycine 83–arginine 91. A run of 2 helical transmembrane segments spans residues valine 92–histidine 112 and glutamate 113–alanine 133. Residues asparagine 134 to threonine 155 lie on the Cytoplasmic side of the membrane. The chain crosses the membrane as a helical span at residues methionine 156–alanine 176. Topologically, residues alanine 177–glycine 180 are periplasmic. The chain crosses the membrane as a helical span at residues tryptophan 181–valine 201. At cysteine 202–lysine 222 the chain is on the cytoplasmic side. A helical transmembrane segment spans residues leucine 223–asparagine 243. Residues glutamine 244–arginine 248 are Periplasmic-facing. The helical transmembrane segment at tryptophan 249–leucine 269 threads the bilayer. Residues histidine 270–lysine 276 lie on the Cytoplasmic side of the membrane. Residues methionine 277 to methionine 297 form a helical membrane-spanning segment. Residues proline 298–glutamine 322 are Periplasmic-facing. A helical transmembrane segment spans residues tyrosine 323–asparagine 343. The Cytoplasmic segment spans residues lysine 344–lysine 354. Residues phenylalanine 355–phenylalanine 375 form a helical membrane-spanning segment. Topologically, residues alanine 376–asparagine 385 are periplasmic. Residues tryptophan 386 to leucine 406 form a helical membrane-spanning segment. The Cytoplasmic segment spans residues alanine 407–arginine 416. The chain crosses the membrane as a helical span at residues leucine 417–glycine 437. Topologically, residues lysine 438–histidine 461 are periplasmic. A helical transmembrane segment spans residues valine 462–proline 482. Topologically, residues lysine 483–asparagine 506 are cytoplasmic.

It belongs to the major facilitator superfamily. Proton-dependent oligopeptide transporter (POT/PTR) (TC 2.A.17) family. DtpA subfamily.

The protein localises to the cell inner membrane. In terms of biological role, proton-dependent permease that transports di- and tripeptides. This chain is Dipeptide and tripeptide permease A, found in Serratia proteamaculans (strain 568).